The following is a 344-amino-acid chain: MIPLVSIIVPMYNVEPFIEECIDSLLRQTLSDIEIILVNDGTPDRSGEIAEDYAKRDARIRVIHQANGGLSSARNTGIKAARGTYIGFVDGDDYVSSAMFQRLTEEAEQNQLDIVGCGFYKQSSDRRTYVPPQLEANRVLTKPEMTEQLKHAHETRFIWYVWRYLYRRELFERANLLFDEDIRFAEDSPFNLSAFREAERVKMLDEGLYIYRENPNSLTEIPYKPAMDEHLQKQYQAKIAFYNHYGLAGACKEDLNVYICRHQLPMLLANACASPNSPKDIKKKIRQILSYDMVRQAVRHTPFQHEKLLRGERLVLALCKWRLTFLIKLFFEQRGTMKGSAKQA.

The protein belongs to the glycosyltransferase 2 family.

May be involved in the production of the exopolysaccharide (EPS) component of the extracellular matrix during biofilm formation. EPS is responsible for the adhesion of chains of cells into bundles. This is an uncharacterized protein from Bacillus subtilis (strain 168).